Here is a 297-residue protein sequence, read N- to C-terminus: Transmembrane protein 169 (297 aa).

The segment at 1–88 (MEESAPVESQ…EGEDFLDYPG (88 aa)) is disordered. The Extracellular portion of the chain corresponds to 1–159 (MEESAPVESQ…CQVGADQGPH (159 aa)). Over residues 22–31 (RRAVAAVLAL) the composition is skewed to low complexity. Acidic residues-rich tracts occupy residues 61–70 (KTDEEPEESE) and 78–88 (EEGEDFLDYPG). The helical transmembrane segment at 160-180 (VVLWTLVCLPVVFVLSFVVSF) threads the bilayer. At 181 to 210 (YYGTITWYNIFLVYNEERTFWHKISCCPCL) the chain is on the cytoplasmic side. A helical membrane pass occupies residues 211–231 (ILFYPVLIMTMASSLGLYAAV). At 232 to 297 (AQLSWSWAAW…PIQEVETSTV (66 aa)) the chain is on the extracellular side.

It localises to the membrane. The protein is Transmembrane protein 169 (Tmem169) of Mus musculus (Mouse).